The primary structure comprises 201 residues: uncharacterized protein (201 aa).

Transmembrane regions (helical) follow at residues 9–29 (YNVF…ILVA), 42–62 (FLFV…FFDV), 86–106 (SGVI…VVMV), and 126–146 (LPYL…SIGM). Composition is skewed to basic and acidic residues over residues 165–174 (EPTDPNKTDN) and 182–191 (DENKKNEKEQ). The disordered stretch occupies residues 165-201 (EPTDPNKTDNRAVVINLDENKKNEKEQSPPSAEMTSL). Over residues 192–201 (SPPSAEMTSL) the composition is skewed to polar residues.

The protein localises to the cell membrane. This is an uncharacterized protein from Mycoplasma genitalium (strain ATCC 33530 / DSM 19775 / NCTC 10195 / G37) (Mycoplasmoides genitalium).